The sequence spans 85 residues: Selenoprotein W (85 aa).

The segment at residues C10 to U13 is a cross-link (cysteinyl-selenocysteine (Cys-Sec); redox-active). Residue U13 is a non-standard amino acid, selenocysteine.

The protein belongs to the SelWTH family. Selenoprotein W subfamily. Expressed ubiquitously with predominant expression in the pituitary, spinal cord, sciatic nerve, cerebral cortex, cerebral nuclei, thalamus, cerebellum, muscle, cartilage, trachea, gizzard and artery. Weakly expressed in pancreas, testis, ovary, kidney and veins.

It localises to the cytoplasm. In terms of biological role, plays a role as a glutathione (GSH)-dependent antioxidant. May be involved in a redox-related process. May play a role in the myopathies of selenium deficiency. The chain is Selenoprotein W from Gallus gallus (Chicken).